We begin with the raw amino-acid sequence, 946 residues long: Protein dct-6 (946 aa).

Residues 326 to 363 adopt a coiled-coil conformation; the sequence is YMDMNDQIEQMIALLVDQLEELEKLEQLCDEVQKTGNQ.

Its function is as follows. May have a role in tumor suppression. The chain is Protein dct-6 from Caenorhabditis briggsae.